The following is a 399-amino-acid chain: Dof zinc finger protein DOF5.1 (399 aa).

The Dof-type zinc finger occupies 95–149; that stretch reads LKCPRCDSTNTKFCYFNNYSLTQPRHFCKACRRYWTRGGALRSVPVGGGCRRNKR. Positions 97, 100, 122, and 125 each coordinate Zn(2+). Residues 139-176 are disordered; it reads PVGGGCRRNKRTKNSSGGGGGSTSSGNSKSQDSATSND.

As to expression, expressed ubiquitously, especially in the vascular tissues, except in seeds, petals and anthers. Specific to the vascular tissues in young leaves, cotyledons and flower buds. The PEAR proteins (e.g. DOF2.4, DOF5.1, DOF3.2, DOF1.1, DOF5.6 and DOF5.3) form a short-range concentration gradient that peaks at protophloem sieve elements (PSE).

The protein resides in the nucleus. In terms of biological role, transcription factor that binds specifically to a 5'-AA[AG]G-3' consensus core sequence. Binds to 5'-TAAAGT-3' motif in REV promoter to triggers its transcription, thus regulating adaxial-abaxial polarity and influencing leaf axial patterning in an auxin transport- and response-dependent manner (e.g. IAA6 and IAA19 genes expression). Probably involved in early processes for vascular development. The PEAR proteins (e.g. DOF2.4, DOF5.1, DOF3.2, DOF1.1, DOF5.6 and DOF5.3) activate gene expression that promotes radial growth of protophloem sieve elements. In Arabidopsis thaliana (Mouse-ear cress), this protein is Dof zinc finger protein DOF5.1.